Here is a 286-residue protein sequence, read N- to C-terminus: MANAKEIKTKIASVQNTQKITSAMEMVAASKMRKAQDRMAASRPYAENMRKVIGHVAQGSLEYKHPYLEVREAKRVGYIVVSTDRGLCGGLNVNLFKKVVADVKKQREAGAEVEFCTIGARSAQFFNSFGGQVSASASGLGDAPKLADLIGTVRVMLEAYNEGKLDRLYVVFNKFVNTMTQAPVIEQLLPLPKSEDDEFTHQWDYIYEPDPKLLLDTLLVRFVESQVYQGVVENIASEQAARMVAMKAATDNAGELIGDLQLVYNKARQAAITQELSEIVSGAAAV.

Belongs to the ATPase gamma chain family. F-type ATPases have 2 components, CF(1) - the catalytic core - and CF(0) - the membrane proton channel. CF(1) has five subunits: alpha(3), beta(3), gamma(1), delta(1), epsilon(1). CF(0) has three main subunits: a, b and c.

It is found in the cell inner membrane. Produces ATP from ADP in the presence of a proton gradient across the membrane. The gamma chain is believed to be important in regulating ATPase activity and the flow of protons through the CF(0) complex. This is ATP synthase gamma chain from Shewanella pealeana (strain ATCC 700345 / ANG-SQ1).